We begin with the raw amino-acid sequence, 132 residues long: Small ribosomal subunit protein uS8 (132 aa).

The protein belongs to the universal ribosomal protein uS8 family. In terms of assembly, part of the 30S ribosomal subunit. Contacts proteins S5 and S12.

In terms of biological role, one of the primary rRNA binding proteins, it binds directly to 16S rRNA central domain where it helps coordinate assembly of the platform of the 30S subunit. This chain is Small ribosomal subunit protein uS8, found in Geobacillus sp. (strain WCH70).